Consider the following 130-residue polypeptide: D-ribose pyranase (130 aa).

The Proton donor role is filled by His-20. Residues Asp-28, His-97, and 119 to 121 each bind substrate; that span reads YAN.

It belongs to the RbsD / FucU family. RbsD subfamily. Homodecamer.

It is found in the cytoplasm. It carries out the reaction beta-D-ribopyranose = beta-D-ribofuranose. Its pathway is carbohydrate metabolism; D-ribose degradation; D-ribose 5-phosphate from beta-D-ribopyranose: step 1/2. In terms of biological role, catalyzes the interconversion of beta-pyran and beta-furan forms of D-ribose. In Heliobacterium modesticaldum (strain ATCC 51547 / Ice1), this protein is D-ribose pyranase.